The sequence spans 130 residues: Snaclec B8 (130 aa).

3 disulfides stabilise this stretch: Cys-2/Cys-13, Cys-30/Cys-124, and Cys-99/Cys-116. The C-type lectin domain maps to 9–125; it reads HEGHCYKVFK…CELAYHFICM (117 aa).

This sequence belongs to the snaclec family. In terms of assembly, heterodimer; disulfide-linked. In terms of tissue distribution, expressed by the venom gland.

Its subcellular location is the secreted. Interferes with one step of hemostasis (modulation of platelet aggregation, or coagulation cascade, for example). The sequence is that of Snaclec B8 from Macrovipera lebetinus (Levantine viper).